A 674-amino-acid polypeptide reads, in one-letter code: MKLNKSYILIVVLLLSLFYSSVSSTKTTLIKSNNHYNSDNSNNDNKNININNNNDGDGDDDDDNNKILITPENQNHLIHDIGIDSSSTEILFGSSSNSGSCGEKNNTKQNALANQREANTIIFIIMLILTGSVLIVYFIISLDIPFVPESVAVVTYGIILGIVFRFFYSDIVNHVVSFEPENFFLFILPTIIFETGYSLHKTDFFNNIGPILMFAVFGTIITFLVVGFGIYIVGYFGVSIALSLKDSFAFGSIISSTDPVCTLAIFQALNVDPMLYILVLGESILNDATSMMLYSVVEDTSTRDIIISCAMFTVVAIGSVILGVVMALLLSLILKWINIGKFPALETIFMVMFSYMSYVLAGALDISGVLAVFFFGITLNQYGAYSLSPYTKLTSGQLFRTAAFISETFLFLYFGLSLTAHEFKFDLGLFSWSILFTCLARAISVFPMCFLLNKFLKTKIPWVIQVAIWFAGLRGAFAFSLSLDYISEDEHMNAYIRTNTLLVVVFTIFVFGMGTYPLLRVLGIKTSQTDQSLDNISKPMSKQTKQKDRTKLYESFDDKYFKPWFRKRVPPLANEAIEIFEKMVIQSSHDHELDSNPLRFDDDEEDDDDEDLDFDSDLDLNININTDSIHQSDNNNNDNGNNNNNNNNIIINNNSQHHSNDGSNNKNNDTLPLI.

Residues methionine 1–serine 24 form the signal peptide. Positions lysine 31–asparagine 65 are disordered. The segment covering asparagine 37–aspartate 55 has biased composition (low complexity). 12 consecutive transmembrane segments (helical) span residues threonine 120 to isoleucine 140, isoleucine 144 to phenylalanine 164, valine 175 to threonine 195, methionine 213 to valine 233, leucine 275 to valine 297, valine 314 to leucine 334, tryptophan 336 to methionine 356, valine 359 to leucine 379, threonine 401 to histidine 421, tryptophan 432 to leucine 452, isoleucine 460 to serine 480, and asparagine 499 to leucine 519. The tract at residues histidine 591–isoleucine 674 is disordered. Acidic residues predominate over residues aspartate 601 to leucine 618. The segment covering aspartate 627–histidine 657 has biased composition (low complexity). Over residues glycine 662–isoleucine 674 the composition is skewed to polar residues.

Belongs to the monovalent cation:proton antiporter 1 (CPA1) transporter (TC 2.A.36) family.

It is found in the membrane. With respect to regulation, LY294002, an inhibitor of the catalytic subunit of PI3-kinase, blocks NHE1-dependent (but not NHE1-independent) increase in intracellular pH in response to cAMP. Regulation of intracellular pH homeostasis in response to cAMP, which is essential for chemotaxis. Necessary for F-actin localization and the kinetics of actin polymerization during chemotaxis and cell polarity but not for directional sensing. The polypeptide is Sodium/hydrogen exchanger 1 (nhe1) (Dictyostelium discoideum (Social amoeba)).